Consider the following 293-residue polypeptide: Rhomboid-like protease 1 (293 aa).

Residues 18-40 (EHTPLYNAETGSRDSDSTSSGGA) are disordered. 6 helical membrane passes run 62-82 (VVLA…CLDT), 112-132 (LLLP…VFFQ), 148-168 (FTGL…TAFF), 174-194 (VGAS…MALT), 217-237 (LLMF…GGLL), and 262-282 (AAAI…LYAV). S177 (nucleophile) is an active-site residue. The active site involves H232.

Belongs to the peptidase S54 family.

It localises to the cytoplasmic vesicle. The protein localises to the secretory vesicle. The protein resides in the microneme membrane. The enzyme catalyses Cleaves type-1 transmembrane domains using a catalytic dyad composed of serine and histidine that are contributed by different transmembrane domains.. In terms of biological role, serine protease involved in intramembrane proteolysis and the subsequent release of polypeptides from their membrane anchors. Has no detectable activity towards MIC2. The protein is Rhomboid-like protease 1 (ROM1) of Toxoplasma gondii.